The chain runs to 485 residues: Forkhead box protein N3 (485 aa).

The disordered stretch occupies residues 1–21; it reads MGPVMPPSKKPESPGISVSSG. A phosphoserine mark is found at serine 83, serine 85, and serine 97. The disordered stretch occupies residues 86–108; it reads PVQDLDDDTPPSPAHSDMPYDAR. A DNA-binding region (fork-head) is located at residues 114 to 210; the sequence is KPPYSFSCLI…QALKKTPYHS (97 aa). The disordered stretch occupies residues 315-454; sequence RTESEPSCGS…DEEMKEAAGS (140 aa). Positions 338-359 are enriched in low complexity; that stretch reads SSAKSSHARSTSPASDCVSSSS. Residues 382–404 show a composition bias toward basic and acidic residues; sequence HESHSETEEDDRKCSPKEAKDAL. A compositionally biased stretch (basic residues) spans 412–424; the sequence is QHKKRQHFAKARK. Serine 443 carries the phosphoserine modification.

In terms of assembly, interacts through its C-terminus with the C-terminus of SNW1/SKIP.

The protein resides in the nucleus. Acts as a transcriptional repressor. May be involved in DNA damage-inducible cell cycle arrests (checkpoints). The chain is Forkhead box protein N3 (FOXN3) from Sus scrofa (Pig).